Consider the following 502-residue polypeptide: Cardiolipin synthase (502 aa).

Transmembrane regions (helical) follow at residues 7-27 (VAIL…YWGG), 29-49 (LLGI…FVIS), and 59-79 (IAWL…YLLF). PLD phosphodiesterase domains are found at residues 237–264 (INFR…GDEY) and 415–442 (EKGF…DMRS). Catalysis depends on residues His-242, Lys-244, Asp-249, His-420, Lys-422, and Asp-427.

This sequence belongs to the phospholipase D family. Cardiolipin synthase subfamily.

It localises to the cell membrane. It carries out the reaction 2 a 1,2-diacyl-sn-glycero-3-phospho-(1'-sn-glycerol) = a cardiolipin + glycerol. Its function is as follows. Catalyzes the reversible phosphatidyl group transfer from one phosphatidylglycerol molecule to another to form cardiolipin (CL) (diphosphatidylglycerol) and glycerol. The chain is Cardiolipin synthase (cls) from Geobacillus thermodenitrificans (strain NG80-2).